The primary structure comprises 402 residues: 2,3-bisphosphoglycerate-independent phosphoglycerate mutase 2 (402 aa).

This sequence belongs to the BPG-independent phosphoglycerate mutase family. A-PGAM subfamily.

The enzyme catalyses (2R)-2-phosphoglycerate = (2R)-3-phosphoglycerate. It participates in carbohydrate degradation; glycolysis; pyruvate from D-glyceraldehyde 3-phosphate: step 3/5. Functionally, catalyzes the interconversion of 2-phosphoglycerate and 3-phosphoglycerate. The sequence is that of 2,3-bisphosphoglycerate-independent phosphoglycerate mutase 2 (apgM2) from Methanothermobacter thermautotrophicus (strain ATCC 29096 / DSM 1053 / JCM 10044 / NBRC 100330 / Delta H) (Methanobacterium thermoautotrophicum).